The primary structure comprises 289 residues: D-alanine aminotransferase (289 aa).

A substrate-binding site is contributed by tyrosine 31. Arginine 50 provides a ligand contact to pyridoxal 5'-phosphate. 2 residues coordinate substrate: arginine 99 and histidine 101. Lysine 147 serves as the catalytic Proton acceptor. Position 147 is an N6-(pyridoxal phosphate)lysine (lysine 147). Glutamate 179 provides a ligand contact to pyridoxal 5'-phosphate.

It belongs to the class-IV pyridoxal-phosphate-dependent aminotransferase family. In terms of assembly, homodimer. Requires pyridoxal 5'-phosphate as cofactor.

It carries out the reaction D-alanine + 2-oxoglutarate = D-glutamate + pyruvate. Its function is as follows. Acts on the D-isomers of alanine, leucine, aspartate, glutamate, aminobutyrate, norvaline and asparagine. The enzyme transfers an amino group from a substrate D-amino acid to the pyridoxal phosphate cofactor to form pyridoxamine and an alpha-keto acid in the first half-reaction. The second half-reaction is the reverse of the first, transferring the amino group from the pyridoxamine to a second alpha-keto acid to form the product D-amino acid via a ping-pong mechanism. This is an important process in the formation of D-alanine and D-glutamate, which are essential bacterial cell wall components. In Listeria innocua serovar 6a (strain ATCC BAA-680 / CLIP 11262), this protein is D-alanine aminotransferase (dat).